Reading from the N-terminus, the 233-residue chain is Orotidine 5'-phosphate decarboxylase (233 aa).

Substrate contacts are provided by residues Asp-9, Lys-31, 58–67 (DLKLHDIPNT), Thr-120, Arg-182, Gln-191, Gly-211, and Arg-212. Lys-60 (proton donor) is an active-site residue.

Belongs to the OMP decarboxylase family. Type 1 subfamily. In terms of assembly, homodimer.

It carries out the reaction orotidine 5'-phosphate + H(+) = UMP + CO2. Its pathway is pyrimidine metabolism; UMP biosynthesis via de novo pathway; UMP from orotate: step 2/2. In terms of biological role, catalyzes the decarboxylation of orotidine 5'-monophosphate (OMP) to uridine 5'-monophosphate (UMP). In Listeria monocytogenes serotype 4a (strain HCC23), this protein is Orotidine 5'-phosphate decarboxylase.